We begin with the raw amino-acid sequence, 1127 residues long: Glutamate receptor-interacting protein 1 (1127 aa).

Gln-11 carries the S-palmitoyl cysteine lipid modification. Position 43 is a phosphoserine (Ser-43). PDZ domains lie at 53 to 136, 150 to 238, 252 to 336, 471 to 560, 572 to 657, and 672 to 754; these read VVEL…EYEL, TVEV…EYDV, LVEV…LPHH, EVVL…EFDV, HVKL…RKDE, and TVEL…KKQT. Disordered stretches follow at residues 752-802, 840-865, and 942-980; these read KQTD…PSVD, KQRT…SNED, and MARS…GRKS. Composition is skewed to polar residues over residues 840–856 and 947–973; these read KQRT…SQTY and LGRQ…NTLP. One can recognise a PDZ 7 domain in the interval 1003–1085; sequence KVTLYKDSGM…KLDLVISRNP (83 aa). The disordered stretch occupies residues 1108–1127; sequence FFQQPSHGGNLETREPTNTL.

In terms of assembly, interacts with EFNB3, GRIA2, GRIA3, GRIPAP1/GRASP1, PPFIA1, PPFIA4, FRAS1, PTPRF, liprins-alpha and the C-terminal tail of PRLHR. Can form homomultimers or heteromultimers with GRIP2. Interacts with EFNB1, EPHA7, EPHB2, KIF5A, KIF5B and KIF5C. Forms a ternary complex with GRIA2 and CSPG4. Interacts with ATAD1 in an ATP-dependent manner. ATAD1-catalyzed ATP hydrolysis disrupts binding to ATAD1 and to GRIA2 and leads to AMPAR complex disassembly. Interacts with SLC30A9 and PLCD4. Interacts with BUD23. Forms a complex with NSG1, GRIA2 and STX12; controls the intracellular fate of AMPAR and the endosomal sorting of the GRIA2 subunit toward recycling and membrane targeting. Interacts with NSG1. Palmitoylation of isoform 2. In terms of tissue distribution, expressed in brain. Isoform 2 is the major isoform in brain. Expressed in oligodendrocyte lineage cells.

The protein localises to the membrane. Its subcellular location is the cytoplasmic vesicle. The protein resides in the perikaryon. It is found in the cell projection. It localises to the dendrite. The protein localises to the cytoplasm. Its subcellular location is the endomembrane system. The protein resides in the postsynaptic cell membrane. It is found in the postsynaptic density. It localises to the endoplasmic reticulum membrane. May play a role as a localized scaffold for the assembly of a multiprotein signaling complex and as mediator of the trafficking of its binding partners at specific subcellular location in neurons. Through complex formation with NSG1, GRIA2 and STX12 controls the intracellular fate of AMPAR and the endosomal sorting of the GRIA2 subunit toward recycling and membrane targeting. The sequence is that of Glutamate receptor-interacting protein 1 (Grip1) from Mus musculus (Mouse).